Reading from the N-terminus, the 259-residue chain is Bis(5'-nucleosyl)-tetraphosphatase, symmetrical (259 aa).

This sequence belongs to the Ap4A hydrolase family.

The catalysed reaction is P(1),P(4)-bis(5'-adenosyl) tetraphosphate + H2O = 2 ADP + 2 H(+). In terms of biological role, hydrolyzes diadenosine 5',5'''-P1,P4-tetraphosphate to yield ADP. The polypeptide is Bis(5'-nucleosyl)-tetraphosphatase, symmetrical (apaH) (Klebsiella aerogenes (Enterobacter aerogenes)).